The primary structure comprises 59 residues: Large ribosomal subunit protein uL30 (59 aa).

The protein belongs to the universal ribosomal protein uL30 family. Part of the 50S ribosomal subunit.

In Citrobacter koseri (strain ATCC BAA-895 / CDC 4225-83 / SGSC4696), this protein is Large ribosomal subunit protein uL30.